A 96-amino-acid chain; its full sequence is Large ribosomal subunit protein uL23 (96 aa).

It belongs to the universal ribosomal protein uL23 family. As to quaternary structure, part of the 50S ribosomal subunit. Contacts protein L29, and trigger factor when it is bound to the ribosome.

Its function is as follows. One of the early assembly proteins it binds 23S rRNA. One of the proteins that surrounds the polypeptide exit tunnel on the outside of the ribosome. Forms the main docking site for trigger factor binding to the ribosome. This Maridesulfovibrio salexigens (strain ATCC 14822 / DSM 2638 / NCIMB 8403 / VKM B-1763) (Desulfovibrio salexigens) protein is Large ribosomal subunit protein uL23.